We begin with the raw amino-acid sequence, 46 residues long: Light-harvesting protein B-800/850 beta 1 chain (46 aa).

At 2 to 19 (AERSLSGLTEEEAIAVHD) the chain is on the cytoplasmic side. Residues His-18 and His-36 each coordinate a bacteriochlorophyll. The helical transmembrane segment at 20-42 (QFKTTFSAFIILAAVAHVLVWVW) threads the bilayer. Over 43-46 (KPWF) the chain is Periplasmic.

Belongs to the antenna complex beta subunit family. As to quaternary structure, the core complex is formed by different alpha and beta chains, binding bacteriochlorophyll molecules, and arranged most probably in tetrameric structures disposed around the reaction center.

It is found in the cell inner membrane. Functionally, antenna complexes are light-harvesting systems, which transfer the excitation energy to the reaction centers. The chain is Light-harvesting protein B-800/850 beta 1 chain (B1) from Magnetospirillum molischianum (Rhodospirillum molischianum).